The primary structure comprises 272 residues: MLELIKAIFLGIVEGITEWLPISSTGHMILVEEFINMNLSDEFMEMFRVVIQLGAIMAVVVLYWNKLFPFSFEDRIQIKKDTFSLWIKVLAATLPAALIGVPFDDKIDELFYNYITVAITLIVYGVLFIIMENRNKSKIPAISTFEELGYKAVLLIGAFQVLALIPGTSRSGATILGAIMIGCSREIAAEFSFYLAIPVMFGASLLKLVKFGFAFSQTELIILLTGMIVAFAVSIFAIKFLMGYIKRNDFKAFGYYRIILGLIVVLYFLAVR.

8 consecutive transmembrane segments (helical) span residues 2 to 22 (LELI…WLPI), 50 to 70 (VIQL…LFPF), 83 to 103 (FSLW…GVPF), 110 to 130 (LFYN…LFII), 148 to 168 (LGYK…IPGT), 195 to 215 (LAIP…GFAF), 220 to 240 (LIIL…AIKF), and 250 to 270 (FKAF…YFLA).

This sequence belongs to the UppP family.

Its subcellular location is the cell membrane. It carries out the reaction di-trans,octa-cis-undecaprenyl diphosphate + H2O = di-trans,octa-cis-undecaprenyl phosphate + phosphate + H(+). Its function is as follows. Catalyzes the dephosphorylation of undecaprenyl diphosphate (UPP). Confers resistance to bacitracin. In Acetivibrio thermocellus (strain ATCC 27405 / DSM 1237 / JCM 9322 / NBRC 103400 / NCIMB 10682 / NRRL B-4536 / VPI 7372) (Clostridium thermocellum), this protein is Undecaprenyl-diphosphatase.